The sequence spans 307 residues: Cysteine synthase (307 aa).

K42 is modified (N6-(pyridoxal phosphate)lysine). Pyridoxal 5'-phosphate-binding positions include N72, 176–180, and S263; that span reads GTGGH.

The protein belongs to the cysteine synthase/cystathionine beta-synthase family. The cofactor is pyridoxal 5'-phosphate.

It catalyses the reaction O-acetyl-L-serine + hydrogen sulfide = L-cysteine + acetate. Its pathway is amino-acid biosynthesis; L-cysteine biosynthesis; L-cysteine from L-serine: step 2/2. The sequence is that of Cysteine synthase (cysK) from Flavobacterium sp. (strain K3-15 / DSM ID92-509).